A 261-amino-acid chain; its full sequence is Carnitinyl-CoA dehydratase (261 aa).

Glu-111 acts as the Nucleophile in catalysis. Glu-131 serves as the catalytic Proton acceptor.

This sequence belongs to the enoyl-CoA hydratase/isomerase family.

It carries out the reaction (R)-carnitinyl-CoA = crotonobetainyl-CoA + H2O. It participates in amine and polyamine metabolism; carnitine metabolism. Functionally, catalyzes the reversible dehydration of L-carnitinyl-CoA to crotonobetainyl-CoA. The protein is Carnitinyl-CoA dehydratase of Salmonella typhimurium (strain LT2 / SGSC1412 / ATCC 700720).